A 123-amino-acid polypeptide reads, in one-letter code: UPF0102 protein PputGB1_4524 (123 aa).

This sequence belongs to the UPF0102 family.

The protein is UPF0102 protein PputGB1_4524 of Pseudomonas putida (strain GB-1).